The chain runs to 78 residues: CDC42 small effector protein 1 (78 aa).

2 S-palmitoyl cysteine lipidation sites follow: Cys-10 and Cys-11. The CRIB domain maps to 30–43 (IGEPMNFVHLTHIG).

The protein belongs to the CDC42SE/SPEC family.

The protein resides in the cytoplasm. The protein localises to the cytoskeleton. It localises to the cell membrane. Its function is as follows. Probably involved in the organization of the actin cytoskeleton by acting downstream of CDC42, inducing actin filament assembly. This is CDC42 small effector protein 1 (CDC42SE1) from Gallus gallus (Chicken).